Here is a 263-residue protein sequence, read N- to C-terminus: Endonuclease 8 (263 aa).

Residue Pro-2 is the Schiff-base intermediate with DNA of the active site. Residue Glu-3 is the Proton donor of the active site. The Proton donor; for beta-elimination activity role is filled by Lys-53. Gln-70, Arg-125, and Asn-169 together coordinate DNA. The segment at 229–263 (KVFHRDGELCERCGGIIEKTTLSSRPFYWCPGCQH) adopts an FPG-type zinc-finger fold. The Proton donor; for delta-elimination activity role is filled by Arg-253.

This sequence belongs to the FPG family. Requires Zn(2+) as cofactor.

The catalysed reaction is 2'-deoxyribonucleotide-(2'-deoxyribose 5'-phosphate)-2'-deoxyribonucleotide-DNA = a 3'-end 2'-deoxyribonucleotide-(2,3-dehydro-2,3-deoxyribose 5'-phosphate)-DNA + a 5'-end 5'-phospho-2'-deoxyribonucleoside-DNA + H(+). Involved in base excision repair of DNA damaged by oxidation or by mutagenic agents. Acts as a DNA glycosylase that recognizes and removes damaged bases. Has a preference for oxidized pyrimidines, such as thymine glycol, 5,6-dihydrouracil and 5,6-dihydrothymine. Has AP (apurinic/apyrimidinic) lyase activity and introduces nicks in the DNA strand. Cleaves the DNA backbone by beta-delta elimination to generate a single-strand break at the site of the removed base with both 3'- and 5'-phosphates. The polypeptide is Endonuclease 8 (Shigella dysenteriae serotype 1 (strain Sd197)).